The following is a 950-amino-acid chain: Glycine dehydrogenase (decarboxylating) (950 aa).

Residue Lys698 is modified to N6-(pyridoxal phosphate)lysine.

The protein belongs to the GcvP family. In terms of assembly, the glycine cleavage system is composed of four proteins: P, T, L and H. Pyridoxal 5'-phosphate serves as cofactor.

It carries out the reaction N(6)-[(R)-lipoyl]-L-lysyl-[glycine-cleavage complex H protein] + glycine + H(+) = N(6)-[(R)-S(8)-aminomethyldihydrolipoyl]-L-lysyl-[glycine-cleavage complex H protein] + CO2. Its function is as follows. The glycine cleavage system catalyzes the degradation of glycine. The P protein binds the alpha-amino group of glycine through its pyridoxal phosphate cofactor; CO(2) is released and the remaining methylamine moiety is then transferred to the lipoamide cofactor of the H protein. The protein is Glycine dehydrogenase (decarboxylating) of Neisseria meningitidis serogroup C / serotype 2a (strain ATCC 700532 / DSM 15464 / FAM18).